Consider the following 316-residue polypeptide: HTH-type transcriptional regulator cbl (316 aa).

In terms of domain architecture, HTH lysR-type spans 1–59; it reads MNFQQLKIIREAARQDYNLTEVANMLFTSQSGVSRHIRELEDELGIEIFVRRGKRLLGM. A DNA-binding region (H-T-H motif) is located at residues 19 to 38; the sequence is LTEVANMLFTSQSGVSRHIR.

This sequence belongs to the LysR transcriptional regulatory family.

Its function is as follows. May be an accessory regulatory protein within the cys regulon. In Escherichia coli (strain K12), this protein is HTH-type transcriptional regulator cbl (cbl).